Here is a 279-residue protein sequence, read N- to C-terminus: Protein phosphatase 1 regulatory subunit 3E (279 aa).

A phosphoserine mark is found at Ser-16 and Ser-33. Residues 28–86 form a disordered region; sequence RSQRPSLEEEPEEEPGEGGTRFGARSRAHAPSRGRRARSAPAGGGGARAPRSRSPDTRK. Residues 51–65 are compositionally biased toward basic residues; it reads ARSRAHAPSRGRRAR. Position 66 is a phosphoserine (Ser-66). The PP1-binding motif motif lies at 87 to 90; sequence RVRF. Positions 154-259 constitute a CBM21 domain; that stretch reads AARLLTQRIC…NNGGRDYALR (106 aa). Residues 176–198 form a glycogen-binding motif region; that stretch reads GSARVVDLAYEKRVSVRWSADGW. The tract at residues 248-256 is substrate-binding motif; the sequence is WDNNGGRDY.

Expressed in skeletal muscle and heart with barely detectable levels in liver.

Its function is as follows. Acts as a glycogen-targeting subunit for PP1. PP1 is involved in glycogen metabolism and contributes to the activation of glycogen synthase leading to an increase in glycogen synthesis. This chain is Protein phosphatase 1 regulatory subunit 3E (PPP1R3E), found in Homo sapiens (Human).